The chain runs to 177 residues: MSEFVTVARPYAKAAFDFAVENQALDRWQSMLAFSAEVARNEQIAELLSGAIAPIELAKTFIAVCGDQLDEAGQNLIRVMAENGRLLVLPEVLEQFIQLRAALESTVDVDVISASTLNEQQLSKIAAAMEKRLSRKVKLNCKIDKSVMAGVVIRAGDMVIDGSIRSRLERLADVLQS.

This sequence belongs to the ATPase delta chain family. As to quaternary structure, F-type ATPases have 2 components, F(1) - the catalytic core - and F(0) - the membrane proton channel. F(1) has five subunits: alpha(3), beta(3), gamma(1), delta(1), epsilon(1). F(0) has three main subunits: a(1), b(2) and c(10-14). The alpha and beta chains form an alternating ring which encloses part of the gamma chain. F(1) is attached to F(0) by a central stalk formed by the gamma and epsilon chains, while a peripheral stalk is formed by the delta and b chains.

It is found in the cell inner membrane. In terms of biological role, f(1)F(0) ATP synthase produces ATP from ADP in the presence of a proton or sodium gradient. F-type ATPases consist of two structural domains, F(1) containing the extramembraneous catalytic core and F(0) containing the membrane proton channel, linked together by a central stalk and a peripheral stalk. During catalysis, ATP synthesis in the catalytic domain of F(1) is coupled via a rotary mechanism of the central stalk subunits to proton translocation. Functionally, this protein is part of the stalk that links CF(0) to CF(1). It either transmits conformational changes from CF(0) to CF(1) or is implicated in proton conduction. The protein is ATP synthase subunit delta of Pectobacterium atrosepticum (strain SCRI 1043 / ATCC BAA-672) (Erwinia carotovora subsp. atroseptica).